The primary structure comprises 427 residues: 3-phosphoshikimate 1-carboxyvinyltransferase (427 aa).

Positions 22, 23, and 27 each coordinate 3-phosphoshikimate. Lys-22 serves as a coordination point for phosphoenolpyruvate. Phosphoenolpyruvate-binding residues include Gly-96 and Arg-124. 3-phosphoshikimate is bound by residues Ser-169, Ser-170, Gln-171, Ser-197, Asp-313, Asn-336, and Lys-340. Phosphoenolpyruvate is bound at residue Gln-171. The Proton acceptor role is filled by Asp-313. Positions 344, 386, and 411 each coordinate phosphoenolpyruvate.

The protein belongs to the EPSP synthase family. In terms of assembly, monomer.

The protein resides in the cytoplasm. The enzyme catalyses 3-phosphoshikimate + phosphoenolpyruvate = 5-O-(1-carboxyvinyl)-3-phosphoshikimate + phosphate. The protein operates within metabolic intermediate biosynthesis; chorismate biosynthesis; chorismate from D-erythrose 4-phosphate and phosphoenolpyruvate: step 6/7. Catalyzes the transfer of the enolpyruvyl moiety of phosphoenolpyruvate (PEP) to the 5-hydroxyl of shikimate-3-phosphate (S3P) to produce enolpyruvyl shikimate-3-phosphate and inorganic phosphate. This chain is 3-phosphoshikimate 1-carboxyvinyltransferase, found in Salmonella schwarzengrund (strain CVM19633).